A 691-amino-acid polypeptide reads, in one-letter code: Elongation factor G (691 aa).

The tr-type G domain occupies 8–282 (ERVRNIGIAA…AVVDYLPAPI (275 aa)). Residues 17-24 (AHIDAGKT), 81-85 (DTPGH), and 135-138 (NKMD) contribute to the GTP site.

It belongs to the TRAFAC class translation factor GTPase superfamily. Classic translation factor GTPase family. EF-G/EF-2 subfamily.

Its subcellular location is the cytoplasm. In terms of biological role, catalyzes the GTP-dependent ribosomal translocation step during translation elongation. During this step, the ribosome changes from the pre-translocational (PRE) to the post-translocational (POST) state as the newly formed A-site-bound peptidyl-tRNA and P-site-bound deacylated tRNA move to the P and E sites, respectively. Catalyzes the coordinated movement of the two tRNA molecules, the mRNA and conformational changes in the ribosome. The chain is Elongation factor G from Prochlorococcus marinus subsp. pastoris (strain CCMP1986 / NIES-2087 / MED4).